A 506-amino-acid polypeptide reads, in one-letter code: 2,3-bisphosphoglycerate-independent phosphoglycerate mutase (506 aa).

Mn(2+) contacts are provided by aspartate 9 and serine 59. Catalysis depends on serine 59, which acts as the Phosphoserine intermediate. Substrate-binding positions include histidine 120, 149–150 (RD), arginine 181, arginine 187, 254–257 (RADR), and lysine 327. Aspartate 394, histidine 398, aspartate 435, histidine 436, and histidine 452 together coordinate Mn(2+).

The protein belongs to the BPG-independent phosphoglycerate mutase family. Mn(2+) is required as a cofactor.

The catalysed reaction is (2R)-2-phosphoglycerate = (2R)-3-phosphoglycerate. It functions in the pathway carbohydrate degradation; glycolysis; pyruvate from D-glyceraldehyde 3-phosphate: step 3/5. In terms of biological role, catalyzes the interconversion of 2-phosphoglycerate and 3-phosphoglycerate. This Natronomonas pharaonis (strain ATCC 35678 / DSM 2160 / CIP 103997 / JCM 8858 / NBRC 14720 / NCIMB 2260 / Gabara) (Halobacterium pharaonis) protein is 2,3-bisphosphoglycerate-independent phosphoglycerate mutase.